A 261-amino-acid polypeptide reads, in one-letter code: uncharacterized protein (261 aa).

Polar residues predominate over residues 1 to 12 (MSRTSSQNQEII). The interval 1–139 (MSRTSSQNQE…KELDTINKKT (139 aa)) is disordered. Residues 23–55 (SSKPSKSSKPSKSSKPSKSSKTSKSSRSSGSKS) show a composition bias toward low complexity. The span at 65 to 74 (SRKDKYKEEY) shows a compositional bias: basic and acidic residues. Positions 79–108 (YPDEQEYEQEYEQEYEQEYQDNGEQTEEFV) are enriched in acidic residues. Basic and acidic residues predominate over residues 122-139 (DERQTQSNKELDTINKKT). 2 coiled-coil regions span residues 151-181 (MDHD…IIKL) and 218-243 (EDII…KKIE).

This is an uncharacterized protein from Acanthamoeba polyphaga (Amoeba).